The following is a 346-amino-acid chain: Immunoglobulin heavy constant alpha (346 aa).

3 Ig-like domains span residues 6–96 (PSIF…KSVD), 118–212 (PRLS…VSIT), and 221–323 (PQVH…KSID). A disulfide bridge connects residues cysteine 26 and cysteine 83. N-linked (GlcNAc...) (complex) asparagine glycosylation is present at asparagine 134. 2 disulfide bridges follow: cysteine 139-cysteine 196 and cysteine 243-cysteine 306. Residue asparagine 333 is glycosylated (N-linked (GlcNAc...) (complex) asparagine).

In terms of assembly, immunoglobulins are composed of two identical heavy chains and two identical light chains; disulfide-linked. Monomeric or polymeric. Part of the secretory IgA (sIgA) complex that consists of two, four or five IgA monomers, and two additional non-Ig polypeptides, namely the JCHAIN and the secretory component (the proteolytic product of PIGR). Post-translationally, N-glycosylated. N-glycans attached to Asn-134 varies from differentially fucosylated complex and hybrid to sialylated with N-glycoyl neuraminic acid types: GlcNAc2Man3GlcNAc2(Fuc); GlcNAc1Man4GlcNAc2(Fuc); GlcNAc1Man4GlcNAc2; Gal1GlcNAc2Man3GlcNAc2(Fuc); GlcNAc2Man3GlcNAc2; Gal1GlcNAc2Man3GlcNAc2; GlcNAc1Man3GlcNAc2; GlcNAc1Man2GlcNAc2 and NeuGc1Gal1GlcNAc2Man3GlcNAc2(Fuc). N-glycans attached to Asn-333 are mainly fucosylated complex types: GlcNAc2Man3GlcNAc2; GlcNAc1Man3GlcNAc2; GlcNAc1Man3GlcNAc2(Fuc); GlcNAc2Man3GlcNAc2(Fuc); Gal1GlcNAc2Man3GlcNAc2(Fuc); NeuGc1Gal1GlcNAc1Man3GlcNAc2(Fuc); NeuGc1Gal1GlcNAc2Man3GlcNAc2(Fuc) and NeuAc1Gal1GlcNAc2Man3GlcNAc2(Fuc).

The protein resides in the secreted. The protein localises to the cell membrane. In terms of biological role, constant region of immunoglobulin heavy chains. Immunoglobulins, also known as antibodies, are membrane-bound or secreted glycoproteins produced by B lymphocytes. In the recognition phase of humoral immunity, the membrane-bound immunoglobulins serve as receptors which, upon binding of a specific antigen, trigger the clonal expansion and differentiation of B lymphocytes into immunoglobulins-secreting plasma cells. Secreted immunoglobulins mediate the effector phase of humoral immunity, which results in the elimination of bound antigens. The antigen binding site is formed by the variable domain of one heavy chain, together with that of its associated light chain. Thus, each immunoglobulin has two antigen binding sites with remarkable affinity for a particular antigen. The variable domains are assembled by a process called V-(D)-J rearrangement and can then be subjected to somatic hypermutations which, after exposure to antigen and selection, allow affinity maturation for a particular antigen. Ig alpha is the major immunoglobulin class in body secretions. In Equus asinus (Donkey), this protein is Immunoglobulin heavy constant alpha (IGHA).